The sequence spans 42 residues: uncharacterized protein (42 aa).

This is an uncharacterized protein from Escherichia coli (Bacteriophage T4).